A 445-amino-acid polypeptide reads, in one-letter code: Glutamate-1-semialdehyde 2,1-aminomutase (445 aa).

Lysine 263 carries the N6-(pyridoxal phosphate)lysine modification.

The protein belongs to the class-III pyridoxal-phosphate-dependent aminotransferase family. HemL subfamily. It depends on pyridoxal 5'-phosphate as a cofactor.

The protein localises to the cytoplasm. The catalysed reaction is (S)-4-amino-5-oxopentanoate = 5-aminolevulinate. Its pathway is porphyrin-containing compound metabolism; protoporphyrin-IX biosynthesis; 5-aminolevulinate from L-glutamyl-tRNA(Glu): step 2/2. In Haloarcula marismortui (strain ATCC 43049 / DSM 3752 / JCM 8966 / VKM B-1809) (Halobacterium marismortui), this protein is Glutamate-1-semialdehyde 2,1-aminomutase.